Reading from the N-terminus, the 755-residue chain is MPPFLLLEAVCVFLFSRVPPSLPLQEVHVSKETIGKISAASKMMWCSAAVDIMFLLDGSNSVGKGSFERSKHFAITVCDGLDISPERVRVGAFQFSSTPHLEFPLDSFSTQQEVKARIKRMVFKGGRTETELALKYLLHRGLPGGRNASVPQILIIVTDGKSQGDVALPSKQLKERGVTVFAVGVRFPRWEELHALASEPRGQHVLLAEQVEDATNGLFSTLSSSAICSSATPDCRVEAHPCEHRTLEMVREFAGNAPCWRGSRRTLAVLAAHCPFYSWKRVFLTHPATCYRTTCPGPCDSQPCQNGGTCVPEGLDGYQCLCPLAFGGEANCALKLSLECRVDLLFLLDSSAGTTLDGFLRAKVFVKRFVRAVLSEDSRARVGVATYSRELLVAVPVGEYQDVPDLVWSLDGIPFRGGPTLTGSALRQAAERGFGSATRTGQDRPRRVVVLLTESHSEDEVAGPARHARARELLLLGVGSEAVRAELEEITGSPKHVMVYSDPQDLFNQIPELQGKLCSRQRPGCRTQALDLVFMLDTSASVGPENFAQMQSFVRSCALQFEVNPDVTQVGLVVYGSQVQTAFGLDTKPTRAAMLRAISQAPYLGGVGSAGTALLHIYDKVMTVQRGARPGVPKAVVVLTGGRGAEDAAVPAQKLRNNGISVLVVGVGPVLSEGLRRLAGPRDSLIHVAAYADLRYHQDVLIEWLCGEAKQPVNLCKPSPCMNEGSCVLQNGSYRCKCRDGWEGPHCENRFLRRP.

A signal peptide spans 1–23 (MPPFLLLEAVCVFLFSRVPPSLP). In terms of domain architecture, VWFA 1 spans 51–222 (DIMFLLDGSN…DATNGLFSTL (172 aa)). N-linked (GlcNAc...) asparagine glycosylation occurs at asparagine 147. The EGF-like 1 domain maps to 296–333 (PGPCDSQPCQNGGTCVPEGLDGYQCLCPLAFGGEANCA). Disulfide bonds link cysteine 299–cysteine 310, cysteine 304–cysteine 320, and cysteine 322–cysteine 332. VWFA domains lie at 343-517 (DLLF…QGKL) and 531-705 (DLVF…IEWL). One can recognise an EGF-like 2 domain in the interval 712 to 748 (PVNLCKPSPCMNEGSCVLQNGSYRCKCRDGWEGPHCE). 3 disulfide bridges follow: cysteine 716-cysteine 727, cysteine 721-cysteine 736, and cysteine 738-cysteine 747.

As to quaternary structure, forms monomers and multimers. A 55 kDa form is produced by proteolytic cleavage. In terms of tissue distribution, expression is generally absent in normal colon and other normal body tissues, but it is induced an average of 78-fold in Stage II, III, and IV colon cancers, as well as in colon adenomas and colon cancer cell lines.

It localises to the secreted. The polypeptide is von Willebrand factor A domain-containing protein 2 (VWA2) (Homo sapiens (Human)).